Consider the following 645-residue polypeptide: 1,4-alpha-glucan branching enzyme GlgB (645 aa).

Asp-309 acts as the Nucleophile in catalysis. Glu-352 functions as the Proton donor in the catalytic mechanism. The interval 619 to 645 (VKTRKGSKKQDGSKTKVRSNVTSRGKR) is disordered. Residues 636-645 (RSNVTSRGKR) show a composition bias toward polar residues.

Belongs to the glycosyl hydrolase 13 family. GlgB subfamily. In terms of assembly, monomer.

The enzyme catalyses Transfers a segment of a (1-&gt;4)-alpha-D-glucan chain to a primary hydroxy group in a similar glucan chain.. It participates in glycan biosynthesis; glycogen biosynthesis. Functionally, catalyzes the formation of the alpha-1,6-glucosidic linkages in glycogen by scission of a 1,4-alpha-linked oligosaccharide from growing alpha-1,4-glucan chains and the subsequent attachment of the oligosaccharide to the alpha-1,6 position. This Bacillus cereus (strain B4264) protein is 1,4-alpha-glucan branching enzyme GlgB.